The chain runs to 231 residues: Regulatory protein VanR (231 aa).

The 114-residue stretch at 4–117 folds into the Response regulatory domain; sequence KILIVDDEHE…ELIARVKAQL (114 aa). 4-aspartylphosphate is present on Asp-53. A DNA-binding region (ompR/PhoB-type) is located at residues 131-231; the sequence is ENVIVHSGLV…VWGVGYKIEK (101 aa).

In terms of assembly, monomer. Post-translationally, phosphorylated by VanS. Dephosphorylated by VanS. Can be phosphorylated nonenzymatically by acetyl-phosphate.

Its subcellular location is the cytoplasm. Its function is as follows. Member of the two-component regulatory system VanS/VanR. Binds to the promoter regions of target genes, including vanH and vanR; phosphorylation of VanR increases binding affinity to the vanH and vanR promoters significantly. DNA binding may be inhibited by the cognate sensor protein, VanS. Activates the transcription of vanH, vanA and vanX in response to vancomycin which results in vancomycin resistance. Involved in conferring vancomycin resistance. This is Regulatory protein VanR (vanR) from Enterococcus faecium (Streptococcus faecium).